A 113-amino-acid chain; its full sequence is Neocarzinostatin (113 aa).

Intrachain disulfides connect Cys-37/Cys-47 and Cys-88/Cys-93.

It belongs to the neocarzinostatin family.

Functionally, NCS has antibiotic activity (for Gram-positive bacteria) and antitumor activity (for certain mouse tumors). NCS binds non-covalently to a chromophore which is the cytotoxic and mutagenic component of the antibiotic. The chromophore binds to DNA as a weak intercalator and causes single- and double-strand breaks. The protein is Neocarzinostatin (ncsA) of Streptomyces malayensis.